The sequence spans 465 residues: Probable Xaa-Pro aminopeptidase pepP (465 aa).

Residues Asp-263, Asp-274, Glu-397, and Glu-437 each coordinate Mn(2+).

It belongs to the peptidase M24B family. Mn(2+) is required as a cofactor.

The enzyme catalyses Release of any N-terminal amino acid, including proline, that is linked to proline, even from a dipeptide or tripeptide.. In terms of biological role, catalyzes the removal of a penultimate prolyl residue from the N-termini of peptides. The chain is Probable Xaa-Pro aminopeptidase pepP (pepP) from Emericella nidulans (strain FGSC A4 / ATCC 38163 / CBS 112.46 / NRRL 194 / M139) (Aspergillus nidulans).